We begin with the raw amino-acid sequence, 214 residues long: ATP-dependent Clp protease proteolytic subunit 3 (214 aa).

Residue Ser106 is the Nucleophile of the active site. The active site involves His131.

The protein belongs to the peptidase S14 family. As to quaternary structure, fourteen ClpP subunits assemble into 2 heptameric rings which stack back to back to give a disk-like structure with a central cavity, resembling the structure of eukaryotic proteasomes.

It is found in the cytoplasm. It carries out the reaction Hydrolysis of proteins to small peptides in the presence of ATP and magnesium. alpha-casein is the usual test substrate. In the absence of ATP, only oligopeptides shorter than five residues are hydrolyzed (such as succinyl-Leu-Tyr-|-NHMec, and Leu-Tyr-Leu-|-Tyr-Trp, in which cleavage of the -Tyr-|-Leu- and -Tyr-|-Trp bonds also occurs).. Cleaves peptides in various proteins in a process that requires ATP hydrolysis. Has a chymotrypsin-like activity. Plays a major role in the degradation of misfolded proteins. This is ATP-dependent Clp protease proteolytic subunit 3 from Trichormus variabilis (strain ATCC 29413 / PCC 7937) (Anabaena variabilis).